The chain runs to 552 residues: MDPAWDGSQGSRPGTASIRVRELSWQGLNNPHPQNKRLGSHGDIHRERWVEERLSPARLQALAQVDDLQLVRVLEMCVDTRKNSLGNFGLYLPNLIQLKLNHSYLGSLRDLGTSLGHLQVLWLARCGLTDLDGIGSFLELKELYVSYNNISDLSPLCLLEQLEVLDLEGNNVEDLGQMRYLQLCPRLAMLTLEGNLVCLKPDPGPSNKAPQGYNYRAEVKKLIPQLHVLDEVPTTCTSAPAPQTLSQDWLMVKEAIKEGSVLDILLPRLDDPHGATIRKFDPTLPVPETQPWALSLLVPGGPLPEGLLSENPATEDHASNLTHGPGQVLCGNPTKGLRKRRNQYQEWAPLEQMPPHRPDLAIRPSTPRPDPAESCDLAMTGLRAWTEPGLRPLLQRQLEFQQERSAQVQAQDPQKDPVEQEDQTGPKTSLTPPRLVSELSRTSGFHLIPSPPKYPMPPESGISSLGRSADLPFRGRRLRVLGSLGPSLGEGSVLGERLAAVTALRALEASSGPSHRAQGCPDPKPALGPAACPPGLHCLHHLNPIPPAHSLP.

LRR repeat units follow at residues 94–115 (NLIQLKLNHSYLGSLRDLGTSL), 117–138 (HLQVLWLARCGLTDLDGIGSFL), 139–160 (ELKELYVSYNNISDLSPLCLLE), 161–182 (QLEVLDLEGNNVEDLGQMRYLQ), and 186–206 (RLAMLTLEGNLVCLKPDPGPS). Disordered stretches follow at residues 348-375 (APLEQMPPHRPDLAIRPSTPRPDPAESC) and 401-435 (QQERSAQVQAQDPQKDPVEQEDQTGPKTSLTPPRL).

Belongs to the LRRC56 family. Interacts with IFT88.

It localises to the cell projection. The protein resides in the cilium. Required for the assembly of dynein arms. This is Leucine-rich repeat-containing protein 56 (Lrrc56) from Mus musculus (Mouse).